The primary structure comprises 164 residues: CB1 cannabinoid receptor-interacting protein 1 (164 aa).

This sequence belongs to the CNRIP family. Interacts with the cannabinoid receptor CNR1 (via C-terminus). Does not interact with cannabinoid receptor CNR2.

Functionally, suppresses cannabinoid receptor CNR1-mediated tonic inhibition of voltage-gated calcium channels. In Rattus norvegicus (Rat), this protein is CB1 cannabinoid receptor-interacting protein 1 (Cnrip1).